We begin with the raw amino-acid sequence, 431 residues long: Histidinol dehydrogenase (431 aa).

Residues Tyr-129, Gln-191, and Asn-214 each contribute to the NAD(+) site. Ser-237, Gln-259, and His-262 together coordinate substrate. Zn(2+) contacts are provided by Gln-259 and His-262. Catalysis depends on proton acceptor residues Glu-327 and His-328. Substrate contacts are provided by His-328, Asp-361, Glu-415, and His-420. Asp-361 provides a ligand contact to Zn(2+). His-420 serves as a coordination point for Zn(2+).

Belongs to the histidinol dehydrogenase family. It depends on Zn(2+) as a cofactor.

The catalysed reaction is L-histidinol + 2 NAD(+) + H2O = L-histidine + 2 NADH + 3 H(+). It participates in amino-acid biosynthesis; L-histidine biosynthesis; L-histidine from 5-phospho-alpha-D-ribose 1-diphosphate: step 9/9. Functionally, catalyzes the sequential NAD-dependent oxidations of L-histidinol to L-histidinaldehyde and then to L-histidine. The polypeptide is Histidinol dehydrogenase (hisD) (Lactococcus lactis subsp. lactis (strain IL1403) (Streptococcus lactis)).